We begin with the raw amino-acid sequence, 411 residues long: Basic leucine zipper 10 (411 aa).

4 disordered regions span residues 1–36, 76–99, 140–251, and 362–411; these read MNSIFSIDDFSDPFWETPPIPLNPDSSKPVTADEVS, SLPSVSGQNDFEDDSRFRDRDSGN, SVKP…NDLK, and NNFA…KCVD. Polar residues predominate over residues 24-36; the sequence is PDSSKPVTADEVS. Residues 89–98 are compositionally biased toward basic and acidic residues; it reads DSRFRDRDSG. Composition is skewed to polar residues over residues 146-173 and 183-193; these read STSSPETQLQPVQSSPLTQGELGVTSSL and SMKQVTSGSSR. A Phosphoserine modification is found at S196. Acidic residues predominate over residues 196–206; it reads SDDEDLDEENE. The bZIP domain occupies 215 to 278; the sequence is DVKKSRRMLS…DEAAVGNRIL (64 aa). The tract at residues 217-236 is basic motif; that stretch reads KKSRRMLSNRESARRSRRRK. The short motif at 219 to 226 is the Nuclear localization signal element; sequence SRRMLSNR. A leucine-zipper region spans residues 243 to 257; the sequence is LETQVNDLKGEHSSL. Over residues 368 to 390 the composition is skewed to polar residues; that stretch reads PSQTSSPLQRIRNGQNHHVTPSA.

It belongs to the bZIP family. In terms of assembly, forms a heterodimer with BZIP1, BZIP2, BZIP9, BZIP11, BZIP44, BZIP53 and BZIP63. Interacts with ABI3 and forms a complex made of ABI3, BZIP53 and BZIP10. Binding with LSD1 leads to cytoplasmic retention. As to expression, expressed in roots, shoots, stems, young leaves, trichomes, hydathodes, siliques, seeds, and flowers, mostly in vascular tissues.

Its subcellular location is the nucleus. It localises to the cytoplasm. Transcription factor that binds to the C-box-like motif (5'-TGCTGACGTCA-3') and G-box-like motif (5'-CCACGTGGCC-3'), ABRE elements, of gene promoters. Binds to the 5'-ACGT-3' motif of seed storage protein (SSP) encoding gene promoters (e.g. At2S and CRU3) and promotes their expression in seeds when in complex with ABI3 and BZIP53. Involved in the defense responses to the biotrophic pathogen Hyaloperonospora parasitica and oxidative stress responses; mediates positively cell death. Promotes BZIP53-mediated response to hypoosmolarity stress that leads to POX1/PRODH1 accumulation. The protein is Basic leucine zipper 10 (BZIP10) of Arabidopsis thaliana (Mouse-ear cress).